The primary structure comprises 352 residues: Quinolinate synthase (352 aa).

Iminosuccinate is bound by residues H48 and S69. C114 contributes to the [4Fe-4S] cluster binding site. Iminosuccinate contacts are provided by residues 140–142 (YAN) and S157. C201 is a [4Fe-4S] cluster binding site. Iminosuccinate contacts are provided by residues 227–229 (HPE) and T244. C298 contacts [4Fe-4S] cluster.

It belongs to the quinolinate synthase family. Type 1 subfamily. Requires [4Fe-4S] cluster as cofactor.

It localises to the cytoplasm. The enzyme catalyses iminosuccinate + dihydroxyacetone phosphate = quinolinate + phosphate + 2 H2O + H(+). It functions in the pathway cofactor biosynthesis; NAD(+) biosynthesis; quinolinate from iminoaspartate: step 1/1. In terms of biological role, catalyzes the condensation of iminoaspartate with dihydroxyacetone phosphate to form quinolinate. The polypeptide is Quinolinate synthase (Pseudomonas syringae pv. syringae (strain B728a)).